The sequence spans 475 residues: Aspartyl/glutamyl-tRNA(Asn/Gln) amidotransferase subunit B (475 aa).

This sequence belongs to the GatB/GatE family. GatB subfamily. As to quaternary structure, heterotrimer of A, B and C subunits.

It carries out the reaction L-glutamyl-tRNA(Gln) + L-glutamine + ATP + H2O = L-glutaminyl-tRNA(Gln) + L-glutamate + ADP + phosphate + H(+). The catalysed reaction is L-aspartyl-tRNA(Asn) + L-glutamine + ATP + H2O = L-asparaginyl-tRNA(Asn) + L-glutamate + ADP + phosphate + 2 H(+). Allows the formation of correctly charged Asn-tRNA(Asn) or Gln-tRNA(Gln) through the transamidation of misacylated Asp-tRNA(Asn) or Glu-tRNA(Gln) in organisms which lack either or both of asparaginyl-tRNA or glutaminyl-tRNA synthetases. The reaction takes place in the presence of glutamine and ATP through an activated phospho-Asp-tRNA(Asn) or phospho-Glu-tRNA(Gln). The protein is Aspartyl/glutamyl-tRNA(Asn/Gln) amidotransferase subunit B of Staphylococcus aureus (strain MRSA252).